A 396-amino-acid polypeptide reads, in one-letter code: Putative peptide chain release factor 1, mitochondrial (396 aa).

Q270 carries the post-translational modification N5-methylglutamine.

The protein belongs to the prokaryotic/mitochondrial release factor family. Post-translationally, methylation of glutamine in the GGQ triplet is conserved from bacteria to mammals.

It localises to the mitochondrion. The sequence is that of Putative peptide chain release factor 1, mitochondrial from Schizosaccharomyces pombe (strain 972 / ATCC 24843) (Fission yeast).